We begin with the raw amino-acid sequence, 379 residues long: Queuine tRNA-ribosyltransferase (379 aa).

Residue Asp96 is the Proton acceptor of the active site. Substrate-binding positions include Asp96–Phe100, Asp150, Gln196, and Gly223. The interval Gly254–Tyr260 is RNA binding. Catalysis depends on Asp273, which acts as the Nucleophile. Cys311, Cys313, Cys316, and His342 together coordinate Zn(2+).

This sequence belongs to the queuine tRNA-ribosyltransferase family. Homodimer. Within each dimer, one monomer is responsible for RNA recognition and catalysis, while the other monomer binds to the replacement base PreQ1. Requires Zn(2+) as cofactor.

The enzyme catalyses 7-aminomethyl-7-carbaguanine + guanosine(34) in tRNA = 7-aminomethyl-7-carbaguanosine(34) in tRNA + guanine. The protein operates within tRNA modification; tRNA-queuosine biosynthesis. In terms of biological role, catalyzes the base-exchange of a guanine (G) residue with the queuine precursor 7-aminomethyl-7-deazaguanine (PreQ1) at position 34 (anticodon wobble position) in tRNAs with GU(N) anticodons (tRNA-Asp, -Asn, -His and -Tyr). Catalysis occurs through a double-displacement mechanism. The nucleophile active site attacks the C1' of nucleotide 34 to detach the guanine base from the RNA, forming a covalent enzyme-RNA intermediate. The proton acceptor active site deprotonates the incoming PreQ1, allowing a nucleophilic attack on the C1' of the ribose to form the product. After dissociation, two additional enzymatic reactions on the tRNA convert PreQ1 to queuine (Q), resulting in the hypermodified nucleoside queuosine (7-(((4,5-cis-dihydroxy-2-cyclopenten-1-yl)amino)methyl)-7-deazaguanosine). In Treponema denticola (strain ATCC 35405 / DSM 14222 / CIP 103919 / JCM 8153 / KCTC 15104), this protein is Queuine tRNA-ribosyltransferase.